Here is a 427-residue protein sequence, read N- to C-terminus: Cysteate synthase (427 aa).

The residue at position 104 (K104) is an N6-(pyridoxal phosphate)lysine. Positions 130 and 382 each coordinate pyridoxal 5'-phosphate.

It belongs to the threonine synthase family. Cysteate synthase subfamily. As to quaternary structure, homotrimer. Requires pyridoxal 5'-phosphate as cofactor.

The catalysed reaction is O-phospho-L-serine + sulfite + H(+) = L-cysteate + phosphate. The protein operates within cofactor biosynthesis; coenzyme M biosynthesis. Specifically catalyzes the beta-elimination of phosphate from L-phosphoserine and the beta-addition of sulfite to the dehydroalanine intermediate to produce L-cysteate. The sequence is that of Cysteate synthase from Methanocella paludicola (strain DSM 17711 / JCM 13418 / NBRC 101707 / SANAE).